We begin with the raw amino-acid sequence, 870 residues long: DNA mismatch repair protein MutS (870 aa).

ATP is bound at residue 629 to 636 (GPNMGGKS).

The protein belongs to the DNA mismatch repair MutS family.

This protein is involved in the repair of mismatches in DNA. It is possible that it carries out the mismatch recognition step. This protein has a weak ATPase activity. The chain is DNA mismatch repair protein MutS from Polaromonas naphthalenivorans (strain CJ2).